The sequence spans 175 residues: Peptide deformylase (175 aa).

Residues Cys-96 and His-138 each contribute to the Fe cation site. The active site involves Glu-139. Residue His-142 coordinates Fe cation.

The protein belongs to the polypeptide deformylase family. Fe(2+) serves as cofactor.

It carries out the reaction N-terminal N-formyl-L-methionyl-[peptide] + H2O = N-terminal L-methionyl-[peptide] + formate. Functionally, removes the formyl group from the N-terminal Met of newly synthesized proteins. Requires at least a dipeptide for an efficient rate of reaction. N-terminal L-methionine is a prerequisite for activity but the enzyme has broad specificity at other positions. This chain is Peptide deformylase, found in Rhodopseudomonas palustris (strain ATCC BAA-98 / CGA009).